The chain runs to 333 residues: Protein FLAP1 homolog A (333 aa).

Residues 26–46 (VVIIFVLAFTLVFTPTFEAEA) traverse the membrane as a helical segment. The segment at 53–74 (IGGGSFRAPSAPSRSYSGPSGG) is disordered. Residues 58–70 (FRAPSAPSRSYSG) show a composition bias toward low complexity. A run of 2 helical transmembrane segments spans residues 92 to 112 (IIPF…LVMI) and 261 to 281 (GEYI…LPAV).

Belongs to the FLAP family.

It localises to the cellular thylakoid membrane. The protein localises to the cell inner membrane. Essential for photosynthetic growth under fluctuating light by modulating PxcA- and PxcL-dependent intracellular pH regulation via proton transport (e.g. transient pH reduction upon transition from dark to light followed by an increase in the light until light-to-dark shift). This chain is Protein FLAP1 homolog A, found in Synechocystis sp. (strain ATCC 27184 / PCC 6803 / Kazusa).